A 250-amino-acid chain; its full sequence is Small ribosomal subunit protein uS2 (250 aa).

This sequence belongs to the universal ribosomal protein uS2 family.

The protein is Small ribosomal subunit protein uS2 of Albidiferax ferrireducens (strain ATCC BAA-621 / DSM 15236 / T118) (Rhodoferax ferrireducens).